A 389-amino-acid polypeptide reads, in one-letter code: Trans-2-enoyl-CoA reductase [NADH] (389 aa).

NAD(+)-binding positions include 47–52, 73–74, 110–111, and 138–139; these read GASTGY, FE, DA, and LA. Y224 contacts substrate. Catalysis depends on Y234, which acts as the Proton donor. NAD(+) contacts are provided by residues K243 and 272–274; that span reads LVT.

Belongs to the TER reductase family. In terms of assembly, monomer.

The enzyme catalyses a 2,3-saturated acyl-CoA + NAD(+) = a (2E)-enoyl-CoA + NADH + H(+). Its pathway is lipid metabolism; fatty acid biosynthesis. Involved in the fatty acid synthesis (FAS II). Catalyzes the reduction of a carbon-carbon double bond in an enoyl moiety that is covalently linked to a coenzyme A (CoA). The polypeptide is Trans-2-enoyl-CoA reductase [NADH] (Clostridium perfringens (strain ATCC 13124 / DSM 756 / JCM 1290 / NCIMB 6125 / NCTC 8237 / Type A)).